Reading from the N-terminus, the 677-residue chain is Protein hook (677 aa).

In terms of domain architecture, Calponin-homology (CH) spans 6-123; it reads NEMYYSLLEW…RLLQLVLGCA (118 aa). Coiled-coil stretches lie at residues 135–436 and 478–588; these read EIMC…KCGH and QTAL…AKEV.

Belongs to the hook family. As to quaternary structure, homodimer. Interacts with microtubules via its N-terminus.

The protein localises to the cytoplasm. It is found in the cytoskeleton. It localises to the endosome. The protein resides in the synapse. Functionally, involved in endocytic trafficking by stabilizing organelles of the endocytic pathway. Probably acts as a cytoskeletal linker protein required to tether endosome vesicles to the cytoskeleton. Involved in modulation of endocytosis at stages required for down-regulation of membrane proteins that control synapse size. Not involved in synaptic vesicle recycling. Required in R7 cells for boss endocytosis into multivesicular bodies (MVBs). Has a role in regulating adult longevity. The sequence is that of Protein hook from Drosophila pseudoobscura pseudoobscura (Fruit fly).